Reading from the N-terminus, the 192-residue chain is Ribose 1,5-bisphosphate phosphokinase PhnN (192 aa).

15–22 (GPSGAGKD) is a binding site for ATP.

This sequence belongs to the ribose 1,5-bisphosphokinase family.

It carries out the reaction alpha-D-ribose 1,5-bisphosphate + ATP = 5-phospho-alpha-D-ribose 1-diphosphate + ADP. The protein operates within metabolic intermediate biosynthesis; 5-phospho-alpha-D-ribose 1-diphosphate biosynthesis; 5-phospho-alpha-D-ribose 1-diphosphate from D-ribose 5-phosphate (route II): step 3/3. Its function is as follows. Catalyzes the phosphorylation of ribose 1,5-bisphosphate to 5-phospho-D-ribosyl alpha-1-diphosphate (PRPP). In Brucella abortus biovar 1 (strain 9-941), this protein is Ribose 1,5-bisphosphate phosphokinase PhnN.